A 476-amino-acid chain; its full sequence is uncharacterized protein (476 aa).

10 consecutive transmembrane segments (helical) span residues 4-24, 81-101, 141-161, 174-194, 207-227, 233-253, 300-320, 351-371, 391-411, and 414-434; these read FFSF…LFGA, ALAI…AAFI, WMGV…FSGV, FDFP…LAIT, FVPL…VMNI, VIWS…GAAG, MIGI…LILL, FVTL…YIYA, ICTF…MWQL, and IIMA…SPVV.

This sequence belongs to the alanine or glycine:cation symporter (AGCS) (TC 2.A.25) family.

It is found in the cell inner membrane. This is an uncharacterized protein from Escherichia coli (strain K12).